Here is a 207-residue protein sequence, read N- to C-terminus: dTTP/UTP pyrophosphatase (207 aa).

The active-site Proton acceptor is the D79.

This sequence belongs to the Maf family. YhdE subfamily. It depends on a divalent metal cation as a cofactor.

Its subcellular location is the cytoplasm. The enzyme catalyses dTTP + H2O = dTMP + diphosphate + H(+). The catalysed reaction is UTP + H2O = UMP + diphosphate + H(+). In terms of biological role, nucleoside triphosphate pyrophosphatase that hydrolyzes dTTP and UTP. May have a dual role in cell division arrest and in preventing the incorporation of modified nucleotides into cellular nucleic acids. The sequence is that of dTTP/UTP pyrophosphatase from Nitrobacter winogradskyi (strain ATCC 25391 / DSM 10237 / CIP 104748 / NCIMB 11846 / Nb-255).